The chain runs to 215 residues: Pyridoxine/pyridoxamine 5'-phosphate oxidase (215 aa).

Residues 9 to 12 (RRDY) and Lys67 contribute to the substrate site. Residues 62-67 (RVVLLK), 77-78 (FT), Lys84, and Gln106 contribute to the FMN site. Residues Tyr124, Arg128, and Ser132 each coordinate substrate. FMN-binding positions include 141–142 (QS) and Trp186. Residue 192–194 (RLH) coordinates substrate. Arg196 is an FMN binding site.

It belongs to the pyridoxamine 5'-phosphate oxidase family. In terms of assembly, homodimer. FMN is required as a cofactor.

The catalysed reaction is pyridoxamine 5'-phosphate + O2 + H2O = pyridoxal 5'-phosphate + H2O2 + NH4(+). It carries out the reaction pyridoxine 5'-phosphate + O2 = pyridoxal 5'-phosphate + H2O2. Its pathway is cofactor metabolism; pyridoxal 5'-phosphate salvage; pyridoxal 5'-phosphate from pyridoxamine 5'-phosphate: step 1/1. It participates in cofactor metabolism; pyridoxal 5'-phosphate salvage; pyridoxal 5'-phosphate from pyridoxine 5'-phosphate: step 1/1. In terms of biological role, catalyzes the oxidation of either pyridoxine 5'-phosphate (PNP) or pyridoxamine 5'-phosphate (PMP) into pyridoxal 5'-phosphate (PLP). The chain is Pyridoxine/pyridoxamine 5'-phosphate oxidase from Chromohalobacter salexigens (strain ATCC BAA-138 / DSM 3043 / CIP 106854 / NCIMB 13768 / 1H11).